The primary structure comprises 466 residues: Polycomb group protein FIE1 (466 aa).

A compositionally biased stretch (basic residues) spans 1–10; it reads MGPTSRNHKS. The disordered stretch occupies residues 1–71; that stretch reads MGPTSRNHKS…GEGEPQETVL (71 aa). The span at 31–49 shows a compositional bias: low complexity; the sequence is SITASASASAFASPAVANS. WD repeat units follow at residues 167–209, 212–252, 258–298, 324–361, 374–414, and 421–460; these read DMNE…IYKS, GHGG…LILV, GHRH…EYVE, IHSNYVDCTKWLGDFVLSKSVENEILLWESITKEENPG, PECN…PVLI, and QVKSAIRQTAVSFDGSTILACTEDGNIWRWDEVDHPTAPV.

This sequence belongs to the WD repeat ESC family. In terms of assembly, interacts with EZ1 and CLF. Component of the polycomb repressive complex 2 (PRC2), which methylates 'Lys-27' residues of histone H3 (H3K27me3), leading to transcriptional repression of the affected target gene. As to expression, expressed specifically in seed endosperm.

Polycomb group (PcG) protein. PcG proteins act by forming multiprotein complexes, which are required to maintain the transcriptionally repressive state of homeotic genes throughout development. PcG proteins are not required to initiate repression, but to maintain it during later stages of development. They act via the methylation of histones, rendering chromatin heritably changed in its expressibility. Together with EZ1 and CLF forms a complex that is involved in gene transcriptional repression by trimethylation on histone H3 'Lys-27' (H3K27me3) of target genes. Involved in the regulation of embryo and seed endosperm development. FIE1-containing PcG complex in seed endosperm regulates the expression of various transcription factors by trimethylation on histone H3 'Lys-27' (H3K27me3) of target genes. Involved in the overall expression regulation of nutrient metabolism genes, such as prolamin synthesis and seed storage protein synthesis genes. Can regulate valine, leucine and isoleucine metabolism-related genes. In Oryza sativa subsp. japonica (Rice), this protein is Polycomb group protein FIE1.